Consider the following 155-residue polypeptide: 3-hydroxyacyl-[acyl-carrier-protein] dehydratase FabZ (155 aa).

The active site involves His-58.

This sequence belongs to the thioester dehydratase family. FabZ subfamily.

It is found in the cytoplasm. The enzyme catalyses a (3R)-hydroxyacyl-[ACP] = a (2E)-enoyl-[ACP] + H2O. In terms of biological role, involved in unsaturated fatty acids biosynthesis. Catalyzes the dehydration of short chain beta-hydroxyacyl-ACPs and long chain saturated and unsaturated beta-hydroxyacyl-ACPs. This chain is 3-hydroxyacyl-[acyl-carrier-protein] dehydratase FabZ, found in Rhizobium etli (strain CIAT 652).